Here is a 492-residue protein sequence, read N- to C-terminus: Transmembrane protein 39B (492 aa).

The segment at 1–53 is disordered; sequence MGGRRGPNRTSYYRNPLCEPGSSGASGGGHSSSASVSSVRSRSRTTSGTGLSS. Asn8 carries an N-linked (GlcNAc...) asparagine glycan. Over residues 31–53 the composition is skewed to low complexity; sequence SSSASVSSVRSRSRTTSGTGLSS. Transmembrane regions (helical) follow at residues 77–97, 115–135, 153–175, 185–205, 288–308, 322–342, 421–441, and 447–467; these read SILF…VHYI, TSLN…IVLG, SLFR…GWSL, TYSF…IPFL, EVLV…VWFV, LFLL…LPAS, ILNI…YSLM, and HQTI…FKLL.

This sequence belongs to the TMEM39 family.

The protein resides in the endoplasmic reticulum membrane. May protect the cells against DNA damage caused by exposure to the cold-warming stress and facilitates tissue damage repair during the recovery phase. The polypeptide is Transmembrane protein 39B (Rattus norvegicus (Rat)).